The following is a 294-amino-acid chain: Cytidine deaminase (294 aa).

CMP/dCMP-type deaminase domains follow at residues 48–168 (DEDA…FGPK) and 186–294 (LTGD…VLLG). 89–91 (NME) contacts substrate. Position 102 (histidine 102) interacts with Zn(2+). The active-site Proton donor is glutamate 104. Zn(2+) contacts are provided by cysteine 129 and cysteine 132.

Belongs to the cytidine and deoxycytidylate deaminase family. As to quaternary structure, homodimer. It depends on Zn(2+) as a cofactor.

The catalysed reaction is cytidine + H2O + H(+) = uridine + NH4(+). It carries out the reaction 2'-deoxycytidine + H2O + H(+) = 2'-deoxyuridine + NH4(+). Its function is as follows. This enzyme scavenges exogenous and endogenous cytidine and 2'-deoxycytidine for UMP synthesis. The chain is Cytidine deaminase from Escherichia fergusonii (strain ATCC 35469 / DSM 13698 / CCUG 18766 / IAM 14443 / JCM 21226 / LMG 7866 / NBRC 102419 / NCTC 12128 / CDC 0568-73).